The primary structure comprises 524 residues: 2,3-bisphosphoglycerate-independent phosphoglycerate mutase (524 aa).

Residues aspartate 13 and serine 63 each coordinate Mn(2+). Residue serine 63 is the Phosphoserine intermediate of the active site. Residues histidine 124, 154–155, arginine 186, arginine 192, 262–265, and lysine 337 each bind substrate; these read RD and RADR. Mn(2+) contacts are provided by aspartate 404, histidine 408, aspartate 445, histidine 446, and histidine 464.

The protein belongs to the BPG-independent phosphoglycerate mutase family. Monomer. Mn(2+) serves as cofactor.

The enzyme catalyses (2R)-2-phosphoglycerate = (2R)-3-phosphoglycerate. It functions in the pathway carbohydrate degradation; glycolysis; pyruvate from D-glyceraldehyde 3-phosphate: step 3/5. In terms of biological role, catalyzes the interconversion of 2-phosphoglycerate and 3-phosphoglycerate. The sequence is that of 2,3-bisphosphoglycerate-independent phosphoglycerate mutase from Thermomicrobium roseum (strain ATCC 27502 / DSM 5159 / P-2).